Reading from the N-terminus, the 159-residue chain is NAD(P)H-quinone oxidoreductase subunit J, chloroplastic (159 aa).

Belongs to the complex I 30 kDa subunit family. As to quaternary structure, NDH is composed of at least 16 different subunits, 5 of which are encoded in the nucleus.

The protein localises to the plastid. It localises to the chloroplast thylakoid membrane. The catalysed reaction is a plastoquinone + NADH + (n+1) H(+)(in) = a plastoquinol + NAD(+) + n H(+)(out). It catalyses the reaction a plastoquinone + NADPH + (n+1) H(+)(in) = a plastoquinol + NADP(+) + n H(+)(out). Functionally, NDH shuttles electrons from NAD(P)H:plastoquinone, via FMN and iron-sulfur (Fe-S) centers, to quinones in the photosynthetic chain and possibly in a chloroplast respiratory chain. The immediate electron acceptor for the enzyme in this species is believed to be plastoquinone. Couples the redox reaction to proton translocation, and thus conserves the redox energy in a proton gradient. The polypeptide is NAD(P)H-quinone oxidoreductase subunit J, chloroplastic (Brachypodium distachyon (Purple false brome)).